Reading from the N-terminus, the 576-residue chain is Polypeptide N-acetylgalactosaminyltransferase 12 (576 aa).

Over 1–19 (MWGRAVRRRCPRGLRRGRE) the chain is Cytoplasmic. A helical; Signal-anchor for type II membrane protein transmembrane segment spans residues 20–37 (ALLALLALAGLGALLRAR). The disordered stretch occupies residues 38–58 (SRSGTVDPGPPRTPLPGRHEP). The Lumenal segment spans residues 38-576 (SRSGTVDPGP…QRWFFKERMS (539 aa)). 5 disulfides stabilise this stretch: Cys-120–Cys-353, Cys-344–Cys-417, Cys-453–Cys-474, Cys-501–Cys-516, and Cys-542–Cys-561. Positions 130–239 (LPKTSVVIAF…EGWLEPLLQR (110 aa)) are catalytic subdomain A. Positions 171 and 200 each coordinate substrate. Mn(2+) contacts are provided by Asp-223 and His-225. Positions 299–361 (VIRSPTMAGG…PCSHVGHVFP (63 aa)) are catalytic subdomain B. Trp-330 contacts substrate. His-358 contacts Mn(2+). Position 366 (Tyr-366) interacts with substrate. In terms of domain architecture, Ricin B-type lectin spans 440–572 (FFGMLQNRGL…NSDNQRWFFK (133 aa)).

It belongs to the glycosyltransferase 2 family. GalNAc-T subfamily. The cofactor is Mn(2+).

The protein resides in the golgi apparatus membrane. The enzyme catalyses L-seryl-[protein] + UDP-N-acetyl-alpha-D-galactosamine = a 3-O-[N-acetyl-alpha-D-galactosaminyl]-L-seryl-[protein] + UDP + H(+). It catalyses the reaction L-threonyl-[protein] + UDP-N-acetyl-alpha-D-galactosamine = a 3-O-[N-acetyl-alpha-D-galactosaminyl]-L-threonyl-[protein] + UDP + H(+). The protein operates within protein modification; protein glycosylation. Functionally, catalyzes the initial reaction in O-linked oligosaccharide biosynthesis, the transfer of an N-acetyl-D-galactosamine residue to a serine or threonine residue on the protein receptor. Has activity toward non-glycosylated peptides such as Muc5AC, Muc1a and EA2, and no detectable activity with Muc2 and Muc7. Displays enzymatic activity toward the Gal-NAc-Muc5AC glycopeptide, but no detectable activity to mono-GalNAc-glycosylated Muc1a, Muc2, Muc7 and EA2. May play an important role in the initial step of mucin-type oligosaccharide biosynthesis in digestive organs. The polypeptide is Polypeptide N-acetylgalactosaminyltransferase 12 (Galnt12) (Mus musculus (Mouse)).